The primary structure comprises 923 residues: Inorganic phosphate transporter PHO87 (923 aa).

An SPX domain is found at 1–334 (MRFSHFLKYN…HMNTRQELIE (334 aa)). At 1–461 (MRFSHFLKYN…KLFFGKRAMK (461 aa)) the chain is on the extracellular side. Disordered stretches follow at residues 40–74 (ETPT…SSSK) and 86–107 (FGSK…IDGN). A compositionally biased stretch (basic and acidic residues) spans 95–104 (KRGDSDEKAI). Residue lysine 102 forms a Glycyl lysine isopeptide (Lys-Gly) (interchain with G-Cter in ubiquitin) linkage. Residues asparagine 162, asparagine 202, and asparagine 274 are each glycosylated (N-linked (GlcNAc...) asparagine). The chain crosses the membrane as a helical span at residues 462 to 482 (IGFIIIVTGVLLGVKTFNDPV). Residues 483-493 (EHRCMALVECC) lie on the Cytoplasmic side of the membrane. Residues 494-514 (AFLWASEAIPLHITGLLVPLL) form a helical membrane-spanning segment. Residues 515-537 (TVLFRVLKDDDGKVMGAAAASTE) are Extracellular-facing. The chain crosses the membrane as a helical span at residues 538-558 (ILGTMWSSTIMILLAGFTLGE). Topologically, residues 559–583 (ALSQYNVAKVLASWLLALAGTKPRN) are cytoplasmic. Residues 584–604 (VLLMAMSVVFFLSMWISNVAS) traverse the membrane as a helical segment. At 605–627 (PVLTYSLLTPLLDPLDYTSPFAK) the chain is on the extracellular side. The helical transmembrane segment at 628-648 (ALVMGVALSADIGGMASPISS) threads the bilayer. At 649–667 (PQNIISMQYLKPYGIGWGQ) the chain is on the cytoplasmic side. Residues 668-688 (FFAVALPTGILSMLCSWALMI) traverse the membrane as a helical segment. At 689 to 707 (LTFKIGKTKLEKFKPIRTR) the chain is on the extracellular side. A helical membrane pass occupies residues 708–728 (FTIKQYFIIIVTIATILLWCV). Over 729-735 (ESQIESA) the chain is Cytoplasmic. A helical membrane pass occupies residues 736 to 756 (FGSSGEIAVIPIVLFFGTGLL). Residues 757–767 (STKDFNTFPWS) are Extracellular-facing. The chain crosses the membrane as a helical span at residues 768 to 788 (IVVLAMGGIALGKAVSSSGLL). At 789–802 (VTIARALQKKIQND) the chain is on the cytoplasmic side. Residues 803-823 (GVFAILCIFGILMLVVGTFVS) form a helical membrane-spanning segment. Residues 824–849 (HTVSAIIIIPLVQEVGDKLSDPKAAP) are Extracellular-facing. Residues 850-870 (ILVFGCALLASCGMGLASSGF) form a helical membrane-spanning segment. Residues 871 to 898 (PNVTAISMTDKKGNRWLTVGAFISRGVP) lie on the Cytoplasmic side of the membrane. A helical membrane pass occupies residues 899 to 919 (ASLLAFVCVITLGYGISSSVL). Residues 920-923 (KGST) are Extracellular-facing.

Belongs to the CitM (TC 2.A.11) transporter family.

It is found in the membrane. Functionally, involved in the uptake of inorganic phosphate. This Saccharomyces cerevisiae (strain ATCC 204508 / S288c) (Baker's yeast) protein is Inorganic phosphate transporter PHO87 (PHO87).